A 147-amino-acid chain; its full sequence is Cyclic di-AMP receptor B (147 aa).

The CBS domain occupies 18 to 78; the sequence is MIEADKVAHV…SIFGLERIEF (61 aa). 3',3'-c-di-AMP is bound by residues Lys23, Ala25, Thr46, Ala47, and Arg131.

Homodimer. Forms a homodimer with a parallel, head-to-head assembly of the monomers. Under conditions of potassium starvation and corresponding low c-di-AMP levels, apo-DarB specifically interacts with the N-terminal region of the RelA. Under the same conditions, apo-DarB also specifically interacts with the C-terminal part of the pyruvate carboxylase.

Its activity is regulated as follows. Binds c-di-AMP. Binding of c-di-AMP to DarB inhibits the interaction with RelA and PYC. Functionally, involved in the c-di-AMP-dependent regulation of the bacterial stringent response. Modulates the activities of at least two enzymes under conditions of potassium limitation. Apo-DarB regulates the activity of the GTP pyrophosphokinase RelA by interacting directly with RelA, leading to stimulation of (p)ppGpp synthesis and induction of the stringent response. Apo-DarB also regulates pyruvate carboxylase (PYC) at two levels: directly at the protein level by binding to the enzyme and stimulating the synthesis of oxaloacetate and indirectly, by interaction with RelA, which leads to activation of the stringent response and to the increased expression of the pycA gene. Stimulation of these enzymes by DarB is prevented in the presence of cyclic di-AMP (c-di-AMP). The chain is Cyclic di-AMP receptor B from Bacillus subtilis (strain 168).